The following is a 183-amino-acid chain: ATP-dependent protease subunit HslV (183 aa).

T7 is an active-site residue. Na(+) is bound by residues G162, C165, and T168.

The protein belongs to the peptidase T1B family. HslV subfamily. A double ring-shaped homohexamer of HslV is capped on each side by a ring-shaped HslU homohexamer. The assembly of the HslU/HslV complex is dependent on binding of ATP.

It is found in the cytoplasm. It carries out the reaction ATP-dependent cleavage of peptide bonds with broad specificity.. Allosterically activated by HslU binding. Its function is as follows. Protease subunit of a proteasome-like degradation complex believed to be a general protein degrading machinery. The sequence is that of ATP-dependent protease subunit HslV from Alkalilimnicola ehrlichii (strain ATCC BAA-1101 / DSM 17681 / MLHE-1).